We begin with the raw amino-acid sequence, 138 residues long: Urease subunit beta (138 aa).

Residues 115 to 138 (RMRAAGFGDTGEAAPDDGDTESDQ) are disordered. A compositionally biased stretch (acidic residues) spans 128 to 138 (APDDGDTESDQ).

It belongs to the urease beta subunit family. As to quaternary structure, heterotrimer of UreA (gamma), UreB (beta) and UreC (alpha) subunits. Three heterotrimers associate to form the active enzyme.

It localises to the cytoplasm. It catalyses the reaction urea + 2 H2O + H(+) = hydrogencarbonate + 2 NH4(+). It participates in nitrogen metabolism; urea degradation; CO(2) and NH(3) from urea (urease route): step 1/1. The sequence is that of Urease subunit beta from Haloarcula marismortui (strain ATCC 43049 / DSM 3752 / JCM 8966 / VKM B-1809) (Halobacterium marismortui).